The primary structure comprises 283 residues: Lysozyme-like protein 7 (283 aa).

The N-terminal stretch at 1 to 18 (MAHKSIVIFSVLAVLCHS) is a signal peptide. In terms of domain architecture, Ch-type lysozyme spans 53 to 273 (YAYALDIYVQ…AVEEDGKIYA (221 aa)).

It belongs to the glycosyl hydrolase 25 family. In terms of tissue distribution, expressed in intestine. Expressed in rectal gland cells and head neurons.

Plays a role in resistance to Gram-positive bacteria B.thuringiensis and M.nematophilum and Gram-negative bacteria S.boydii or S.flexneri infection and to fungus C.neoformans infection. Plays a role in susceptibility to Gram-negative bacterium S.typhimurium infection. This is Lysozyme-like protein 7 from Caenorhabditis elegans.